The primary structure comprises 549 residues: RNA-induced transcriptional silencing complex protein tas3 (549 aa).

Disordered regions lie at residues 89–111, 126–184, 202–225, 298–361, and 381–430; these read KNSP…VRAS, DGKE…SDSI, IRSS…SSKS, LDNF…HLEK, and AHFH…PLAS. Positions 298–307 are enriched in polar residues; that stretch reads LDNFNRPSQQ. Basic and acidic residues-rich tracts occupy residues 328–361 and 403–416; these read YDSY…HLEK and SDRQ…ELPT. Over residues 419–430 the composition is skewed to polar residues; it reads LNASDSHNPLAS.

In terms of assembly, ago1, chp1 and tas3 interact to form the core of the RNA-induced transcriptional silencing (RITS) complex. The RITS complex interacts with the RDRC complex via interaction between ago1 and hrr1. Clr4 has a role in mediating this interaction.

Its subcellular location is the nucleus. It localises to the cytoplasm. The protein localises to the cytoskeleton. The protein resides in the microtubule organizing center. It is found in the spindle pole body. Its function is as follows. Has a role in the RNA interference (RNAi) pathway which is important for heterochromatin formation and accurate chromosome segregation. A member of the RNA-induced transcriptional silencing (RITS) complex which is involved in the biosynthesis of dsRNA from primer siRNAs provided by the RNA-directed RNA polymerase (RDRC) complex. The polypeptide is RNA-induced transcriptional silencing complex protein tas3 (tas3) (Schizosaccharomyces pombe (strain 972 / ATCC 24843) (Fission yeast)).